The primary structure comprises 313 residues: Zinc transporter ZitB (313 aa).

The Cytoplasmic segment spans residues 1 to 20 (MAHSHSHTSSHLPEDNNARR). A helical transmembrane segment spans residues 21–41 (LLYAFGVTAGFMLVEVVGGFL). Residues 42 to 47 (SGSLAL) lie on the Periplasmic side of the membrane. A helical membrane pass occupies residues 48–68 (LADAGHMLTDTAALLFALLAV). Topologically, residues 69-89 (QFSRRPPTIRHTFGWLRLTTL) are cytoplasmic. The chain crosses the membrane as a helical span at residues 90 to 110 (AAFVNAIALVVITILIVWEAI). Residues 111-121 (ERFRTPRPVEG) lie on the Periplasmic side of the membrane. Residues 122–142 (GMMMAIAVAGLLANILSFWLL) traverse the membrane as a helical segment. Residues 143-159 (HHGSEEKNLNVRAAALH) lie on the Cytoplasmic side of the membrane. A helical transmembrane segment spans residues 160–180 (VLGDLLGSVGAIIAALIIIWT). Gly181 is a topological domain (periplasmic). The chain crosses the membrane as a helical span at residues 182 to 202 (WTPADPILSILVSLLVLRSAW). At 203–313 (RLLKDSVNEL…GVSGHSHHHH (111 aa)) the chain is on the cytoplasmic side.

The protein belongs to the cation diffusion facilitator (CDF) transporter (TC 2.A.4) family. SLC30A subfamily.

It is found in the cell inner membrane. Functionally, involved in zinc efflux across the cytoplasmic membrane, thus reducing zinc accumulation in the cytoplasm and rendering bacteria more resistant to zinc. It may contribute to zinc homeostasis at low concentrations of zinc, whereas ZntA is required for growth at more toxic concentrations. In Escherichia coli (strain K12), this protein is Zinc transporter ZitB (zitB).